Here is a 338-residue protein sequence, read N- to C-terminus: MO25-like protein 2 (338 aa).

Belongs to the Mo25 family.

The protein resides in the cytoplasm. The protein localises to the cytoskeleton. Its subcellular location is the spindle pole. Regulates asymmetric cell division in Q.p neuroblast lineage. Plays a role in cell shedding during embryogenesis. In Caenorhabditis elegans, this protein is MO25-like protein 2 (mop-25.2).